Here is a 404-residue protein sequence, read N- to C-terminus: Demethylphylloquinone reductase NdbB (404 aa).

An FAD-binding site is contributed by 7–43 (RICILGGGFGGLYTALRLGQLSWEGHTPPEIVLVDQR). 159–195 (IRIAIVGGGYSGVELAAKLGDRLGERGRIRIIERGKE) provides a ligand contact to NADP(+).

It belongs to the NADH dehydrogenase family. The cofactor is FAD.

The enzyme catalyses demethylphylloquinone + NADPH + H(+) = demethylphylloquinol + NADP(+). Its pathway is cofactor biosynthesis; phylloquinone biosynthesis. Its activity is regulated as follows. Inhibited by dicumarol. Functionally, bifunctional oxidoreductase probably ables to act both on prenyl naphthoquinones and on prenyl benzoquinones. Catalyzes the penultimate step in the biosynthesis of vitamin K1. This Synechocystis sp. (strain ATCC 27184 / PCC 6803 / Kazusa) protein is Demethylphylloquinone reductase NdbB.